A 105-amino-acid chain; its full sequence is Large ribosomal subunit protein uL24 (105 aa).

It belongs to the universal ribosomal protein uL24 family. As to quaternary structure, part of the 50S ribosomal subunit.

Functionally, one of two assembly initiator proteins, it binds directly to the 5'-end of the 23S rRNA, where it nucleates assembly of the 50S subunit. One of the proteins that surrounds the polypeptide exit tunnel on the outside of the subunit. The polypeptide is Large ribosomal subunit protein uL24 (Clostridium botulinum (strain 657 / Type Ba4)).